The chain runs to 320 residues: uncharacterized protein (320 aa).

Position 46 to 53 (D46 to T53) interacts with ATP.

The protein belongs to the MoxR family.

This is an uncharacterized protein from Bacillus subtilis (strain 168).